Consider the following 381-residue polypeptide: MSDDEEPPLKKNKLPVEEPTLIPSLPEELILSILARVSRLSYRSLSLVCKRFHSLLTSGEIYRFRSLSGYTENCLYVCLRFSHTGRSHRWFMLREKNKSSGYVLAPIPISHSPSLHASSIVAVGSKIYKIGGVMDGSSVSILDCWSHRWLEAPSMQMERDRPSANLIDGKIYVTGGCHRGSYNPSKWMEVFDLKTETWEPVLCRSDRLTFESYHERTNNLLVDGKLYIFWADKGVVYNPKDDTWDSLEVPEMDMCLTLFYCCVIENVLYDFFYEELDIKWYDTKARTWRSLLNGMRELHKFVRHASVTLADYGGKMVMFWDKFVASGDGLGFHKTMMWCAMIALERSDSGEIWGKVEWFGPVLPNQIPLEYAFEYVGSVKV.

Residues proline 19–arginine 65 form the F-box domain. 4 Kelch repeats span residues lysine 126–glycine 169, isoleucine 171–asparagine 218, leucine 220–asparagine 266, and tyrosine 269–glycine 314.

The protein is Putative F-box/kelch-repeat protein At1g60570 of Arabidopsis thaliana (Mouse-ear cress).